Consider the following 331-residue polypeptide: Outer membrane lipoprotein PM1514 (331 aa).

A signal peptide spans 1–20; the sequence is MQYFDIKKSLPVFCSLLITA. Cys21 is lipidated: N-palmitoyl cysteine. Cys21 carries S-diacylglycerol cysteine lipidation.

It localises to the cell outer membrane. The protein localises to the cell surface. The chain is Outer membrane lipoprotein PM1514 from Pasteurella multocida (strain Pm70).